The chain runs to 208 residues: uncharacterized protein (208 aa).

This is an uncharacterized protein from Synechococcus elongatus (strain ATCC 33912 / PCC 7942 / FACHB-805) (Anacystis nidulans R2).